The following is a 159-amino-acid chain: Ecotin (159 aa).

An N-terminal signal peptide occupies residues 1–22 (MRPTPLSTILALTMAATAPAMA). Cys-68 and Cys-105 form a disulfide bridge.

It belongs to the protease inhibitor I11 (ecotin) family. Homodimer.

Its subcellular location is the periplasm. Its function is as follows. General inhibitor of family S1 serine proteases. In Pseudomonas putida (strain W619), this protein is Ecotin.